The chain runs to 176 residues: ATP-dependent protease subunit HslV (176 aa).

T2 is an active-site residue. Residues G157, C160, and T163 each contribute to the Na(+) site.

This sequence belongs to the peptidase T1B family. HslV subfamily. As to quaternary structure, a double ring-shaped homohexamer of HslV is capped on each side by a ring-shaped HslU homohexamer. The assembly of the HslU/HslV complex is dependent on binding of ATP.

The protein resides in the cytoplasm. The enzyme catalyses ATP-dependent cleavage of peptide bonds with broad specificity.. With respect to regulation, allosterically activated by HslU binding. Its function is as follows. Protease subunit of a proteasome-like degradation complex believed to be a general protein degrading machinery. This chain is ATP-dependent protease subunit HslV, found in Salmonella gallinarum (strain 287/91 / NCTC 13346).